Here is a 117-residue protein sequence, read N- to C-terminus: Gamma-aminobutyric acid receptor-associated protein-like 1 (117 aa).

Gly116 carries the Phosphatidylethanolamine amidated glycine; alternate lipid modification. Gly116 is lipidated: Phosphatidylserine amidated glycine; alternate. Lys117 is a propeptide (removed in mature form).

Belongs to the ATG8 family. Interacts with ATG13, OPRK1, RB1CC1 and ULK1. Interacts with TP53INP1 and TP53INP2. Directly interacts with SQSTM1. Interacts with ATG3, ATG7 and MAP15. Interacts with TECPR2. Interacts with TBC1D5. Interacts with MAPK15. Interacts with TRIM5. Interacts with MEFV and TRIM21. Interacts with WDFY3. Interacts with the reticulophagy receptor TEX264. Interacts with UBA5. Interacts with KBTBD6 and KBTBD7; the interaction is direct. Interacts with reticulophagy regulators RETREG1, RETREG2 and RETREG3. Interacts with IRGM. Interacts with DNM2. Interacts with NCOA4 (via C-terminus). The precursor molecule is cleaved by ATG4 (ATG4A, ATG4B, ATG4C or ATG4D) to expose the glycine at the C-terminus and form the cytosolic form, GABARAPL1-I. The processed form is then activated by APG7L/ATG7, transferred to ATG3 and conjugated to phosphatidylethanolamine (PE) phospholipid to form the membrane-bound form, GABARAPL1-II. During non-canonical autophagy, the processed form is conjugated to phosphatidylserine (PS) phospholipid. ATG4 proteins also mediate the delipidation of PE-conjugated forms required for GABARAPL1 recycling when autophagosomes fuse with lysosomes. In addition, ATG4B and ATG4D mediate delipidation of ATG8 proteins conjugated to PS during non-canonical autophagy. ATG4B constitutes the major protein for proteolytic activation. ATG4D is the main enzyme for delipidation activity.

It localises to the cytoplasmic vesicle. It is found in the autophagosome. The protein localises to the cytoplasmic vesicle membrane. Its subcellular location is the cytoplasm. The protein resides in the cytoskeleton. It localises to the endoplasmic reticulum. It is found in the golgi apparatus. In terms of biological role, ubiquitin-like modifier that increases cell-surface expression of kappa-type opioid receptor through facilitating anterograde intracellular trafficking of the receptor. Involved in formation of autophagosomal vacuoles. While LC3s are involved in elongation of the phagophore membrane, the GABARAP/GATE-16 subfamily is essential for a later stage in autophagosome maturation. Through its interaction with the reticulophagy receptor TEX264, participates in the remodeling of subdomains of the endoplasmic reticulum into autophagosomes upon nutrient stress, which then fuse with lysosomes for endoplasmic reticulum turnover. This chain is Gamma-aminobutyric acid receptor-associated protein-like 1, found in Pongo abelii (Sumatran orangutan).